A 118-amino-acid polypeptide reads, in one-letter code: Small ribosomal subunit protein uS13 (118 aa).

The segment at 94 to 118 (SLPLRGQRTKTNARTRKGPRKPIKK) is disordered.

Belongs to the universal ribosomal protein uS13 family. In terms of assembly, part of the 30S ribosomal subunit. Forms a loose heterodimer with protein S19. Forms two bridges to the 50S subunit in the 70S ribosome.

In terms of biological role, located at the top of the head of the 30S subunit, it contacts several helices of the 16S rRNA. In the 70S ribosome it contacts the 23S rRNA (bridge B1a) and protein L5 of the 50S subunit (bridge B1b), connecting the 2 subunits; these bridges are implicated in subunit movement. Contacts the tRNAs in the A and P-sites. The sequence is that of Small ribosomal subunit protein uS13 from Vibrio cholerae serotype O1 (strain ATCC 39315 / El Tor Inaba N16961).